A 134-amino-acid polypeptide reads, in one-letter code: DKGPGFVVTGRVYCDPCRAGFETNVSHNVEGATVAVDCRPFDGGESKLKAEATTDKDGWYKIEIDQDHQEEICEVVLAKSPDKSCSEIEEFRDRARVPLTSNXGIKQQGIRYANPIAFFRKEPLKECGGILQAY.

3 disulfide bridges follow: Cys-14/Cys-85, Cys-17/Cys-127, and Cys-38/Cys-73. Residue Asn-24 is glycosylated (N-linked (GlcNAc...) asparagine).

The protein belongs to the Ole e I family.

It is found in the secreted. The protein is Major pollen allergen Lol p 11 of Lolium perenne (Perennial ryegrass).